We begin with the raw amino-acid sequence, 84 residues long: Large ribosomal subunit protein bL27 (84 aa).

Residues 1–11 are compositionally biased toward polar residues; the sequence is MATTKAGGSTK. The interval 1–20 is disordered; sequence MATTKAGGSTKNGRDSHSKR.

Belongs to the bacterial ribosomal protein bL27 family.

The sequence is that of Large ribosomal subunit protein bL27 from Mycoplasmopsis synoviae (strain 53) (Mycoplasma synoviae).